The following is a 269-amino-acid chain: Protein IAL1 (269 aa).

In terms of domain architecture, LOB spans 32-133 (SPCAACKFLR…QDLARAKYEL (102 aa)).

Belongs to the LOB domain-containing protein family. As to expression, expressed in leaves, leaf primordia, immature ears, immature tassels, whole ovules, silk and husk leaves.

Its subcellular location is the nucleus. This is Protein IAL1 from Zea mays (Maize).